Consider the following 522-residue polypeptide: E3 ubiquitin-protein ligase TRIM65 (522 aa).

Ala2 carries the N-acetylalanine modification. An RING-type zinc finger spans residues 13 to 52; sequence CSICLGRYRDPVTLPCGHSFCGNCIQDSWRSCEKSCPECR. A B box-type zinc finger spans residues 92-134; the sequence is SHSARCLRHGRPLEFFCRTEGLCVCSACTVHDCSHHERALLDV. A coiled-coil region spans residues 141-229; sequence DQLRARVLVT…QRLTDHLRAL (89 aa). Ser187 is modified (phosphoserine). The 194-residue stretch at 316–509 folds into the B30.2/SPRY domain; the sequence is APVPSAVCPL…LTLCHQPEAT (194 aa).

It belongs to the TRIM/RBCC family. As to quaternary structure, homo-multimerizes. Interacts with ARRDC4.

It localises to the cytoplasm. It catalyses the reaction S-ubiquitinyl-[E2 ubiquitin-conjugating enzyme]-L-cysteine + [acceptor protein]-L-lysine = [E2 ubiquitin-conjugating enzyme]-L-cysteine + N(6)-ubiquitinyl-[acceptor protein]-L-lysine.. It functions in the pathway protein modification; protein ubiquitination. In terms of biological role, E3 ubiquitin ligase that plays a role in several processes including innate immnity, autophagy or inflammation. Negatively regulates miRNAs by modulating the ubiquitination and stability of TNRC6A, a protein involved in RNA-mediated gene silencing by both micro-RNAs (miRNAs) and short interfering RNAs. This ubiquitination results in the suppressed expression of miR-138-5p leading to increased autophagy. Upon enteroviral infection, promotes 'Lys-63'-mediated ubiquitination activation of IFIH1/MDA5 leading to innate signaling cascade. Mechanistically, selectively recognizes MDA5 filaments that occur on dsRNAs. Also plays a role in limitation of inflammation through different mechanisms. First, promotes 'Lys-48'-mediated ubiquitination of VCAM1 leading to its degradation and limitation of LPS-induced lung inflammation. In addition, negatively regulates inflammasome activation by promoting 'lys48'-linked ubiquitination of NLRP3 which is critical for the inhibition of NLRP3 inflammasome activation in resting macrophages. In Mus musculus (Mouse), this protein is E3 ubiquitin-protein ligase TRIM65 (Trim65).